An 80-amino-acid polypeptide reads, in one-letter code: CLAVATA3/ESR (CLE)-related protein 40 (80 aa).

An N-terminal signal peptide occupies residues 1–25; the sequence is MAAMKYKGSVFIILVILLLSSSLLA. The interval 45-80 is disordered; it reads MKKEKKIDGGTANEVEERQVPTGSDPLHHKHIPFTP. P65 carries the post-translational modification Hydroxyproline.

The protein belongs to the CLV3/ESR signal peptide family. Mostly expressed at low levels in stems and apex, and, to a lower extent, in roots, seedlings, leaves, flowers, siliques and pollen.

Its subcellular location is the secreted. It localises to the extracellular space. Functionally, extracellular signal peptide secreted by differentiated root cells that regulates root cell fate. Acts with ACR4 as a ligand-receptor pair in a signal transduction pathway, coordinating movement of the root tip and organization of cell divisions in the root meristem. Promotes cell differentiation in the distal root meristem in a dose-dependent manner, especially the transition from columella stem cells (CSC) daughters into columella cells (CCs). Induces ACR4 expression in root quiescent center (QC). Involved in WUX5 QC-specific expression pattern regulation. Regulates the transition of protophloem cells from proliferation to differentiation, thus impinging on postembryonic growth capacity of the root meristem; this signaling pathway requires CRN and CLV2. In Arabidopsis thaliana (Mouse-ear cress), this protein is CLAVATA3/ESR (CLE)-related protein 40.